The primary structure comprises 198 residues: Na(+)-translocating NADH-quinone reductase subunit E (198 aa).

6 helical membrane passes run 11–31 (SIFI…FLAV), 39–59 (FGLG…NNLV), 77–97 (FLNF…LEMI), 110–130 (GIFL…SFMV), 140–160 (IVYG…LAGI), and 176–196 (LGIT…FSGV).

The protein belongs to the NqrDE/RnfAE family. In terms of assembly, composed of six subunits; NqrA, NqrB, NqrC, NqrD, NqrE and NqrF.

It localises to the cell inner membrane. It catalyses the reaction a ubiquinone + n Na(+)(in) + NADH + H(+) = a ubiquinol + n Na(+)(out) + NAD(+). Functionally, NQR complex catalyzes the reduction of ubiquinone-1 to ubiquinol by two successive reactions, coupled with the transport of Na(+) ions from the cytoplasm to the periplasm. NqrA to NqrE are probably involved in the second step, the conversion of ubisemiquinone to ubiquinol. The chain is Na(+)-translocating NADH-quinone reductase subunit E from Photobacterium profundum (strain SS9).